Consider the following 539-residue polypeptide: Phosphoenolpyruvate carboxykinase (ATP) (539 aa).

Substrate-binding residues include Arg-64, Tyr-206, and Lys-212. Residues Lys-212, His-231, and 247 to 255 (GLSGTGKTT) each bind ATP. Positions 212 and 231 each coordinate Mn(2+). Asp-268 is a Mn(2+) binding site. ATP-binding positions include Glu-296, Arg-332, 448–449 (RI), and Thr-454. Residue Arg-332 coordinates substrate.

Belongs to the phosphoenolpyruvate carboxykinase (ATP) family. In terms of assembly, monomer. Mn(2+) serves as cofactor.

The protein localises to the cytoplasm. It catalyses the reaction oxaloacetate + ATP = phosphoenolpyruvate + ADP + CO2. It participates in carbohydrate biosynthesis; gluconeogenesis. Its function is as follows. Involved in the gluconeogenesis. Catalyzes the conversion of oxaloacetate (OAA) to phosphoenolpyruvate (PEP) through direct phosphoryl transfer between the nucleoside triphosphate and OAA. In Pectobacterium carotovorum subsp. carotovorum (strain PC1), this protein is Phosphoenolpyruvate carboxykinase (ATP).